Consider the following 282-residue polypeptide: 3-methyl-2-oxobutanoate hydroxymethyltransferase (282 aa).

2 residues coordinate Mg(2+): D44 and D83. 3-methyl-2-oxobutanoate contacts are provided by residues 44 to 45, D83, and K112; that span reads DS. E114 contacts Mg(2+). E181 functions as the Proton acceptor in the catalytic mechanism.

Belongs to the PanB family. Homodecamer; pentamer of dimers. It depends on Mg(2+) as a cofactor.

It localises to the cytoplasm. The enzyme catalyses 3-methyl-2-oxobutanoate + (6R)-5,10-methylene-5,6,7,8-tetrahydrofolate + H2O = 2-dehydropantoate + (6S)-5,6,7,8-tetrahydrofolate. It participates in cofactor biosynthesis; coenzyme A biosynthesis. Catalyzes the reversible reaction in which hydroxymethyl group from 5,10-methylenetetrahydrofolate is transferred onto alpha-ketoisovalerate to form ketopantoate. This Pyrococcus abyssi (strain GE5 / Orsay) protein is 3-methyl-2-oxobutanoate hydroxymethyltransferase.